We begin with the raw amino-acid sequence, 201 residues long: MATNVLNSIRERGFLDGQFLIAMPGMFDANFARTVIFVCAHSEDGAMGFILNRPQRLTFPDVLLHLQLLDPDEVIRLPSTTREFQIQAGGPVETGRGFVLHSDDYLSDSSIPVSDDICLTATLDIVRAISRGEGPVKATMLLGYAGWGPGQLEAEITQNGWLTCPAQEELIFSRNLDEKYDRALALMGVSPAMLSTDSGHA.

The protein belongs to the UPF0301 (AlgH) family.

This chain is UPF0301 protein Smed_0532, found in Sinorhizobium medicae (strain WSM419) (Ensifer medicae).